Here is a 123-residue protein sequence, read N- to C-terminus: Undecaprenol kinase (123 aa).

Residues 1–33 lie on the Cytoplasmic side of the membrane; the sequence is MDSKDHRNELNRFFKSFVHAGRGIWETARTERN. Residues 34–51 traverse the membrane as a helical segment; that stretch reads FQFHAAAACAVLICGFLV. Residues 52 to 57 are Extracellular-facing; sequence ELSIIE. The chain crosses the membrane as a helical span at residues 58-74; the sequence is WMIIFLLIGGMFSLELL. At 75 to 99 the chain is on the cytoplasmic side; the sequence is NTAIEHTVDLITDKHHPLAKAAKDA. Residues 100 to 120 traverse the membrane as a helical segment; sequence AAGAVCVFAVISCIIGLLIFL. Over 121-123 the chain is Extracellular; it reads PKL.

Belongs to the bacterial diacylglycerol kinase family.

It localises to the cell membrane. It carries out the reaction di-trans,octa-cis-undecaprenol + ATP = di-trans,octa-cis-undecaprenyl phosphate + ADP + H(+). Functionally, catalyzes the phosphorylation of undecaprenol in vitro, which is probably the physiological substrate. Exhibits no detectable activity against other substrates such as monoacylglycerol, ceramide, or diacylglycerol (DAG). Appears indispensable for the maintenance of spore stability and viability in B.subtilis. This chain is Undecaprenol kinase (dgkA), found in Bacillus subtilis (strain 168).